The following is a 505-amino-acid chain: L-carnitine/gamma-butyrobetaine antiporter (505 aa).

The next 12 helical transmembrane spans lie at 10–30 (IEPK…WLTV), 50–70 (IWGW…FWLV), 92–112 (IFMM…SIEI), 143–163 (GPLP…FFFV), 195–215 (FYLV…TPLV), 231–251 (LDAI…ACGL), 263–283 (SYLS…SFIM), 316–336 (WTVF…IFLA), 347–367 (LCFG…TVLG), 403–423 (FSTA…VTLI), 446–466 (LLVR…LLAL), and 475–495 (AIIA…LSFI).

The protein belongs to the BCCT transporter (TC 2.A.15) family. CaiT subfamily. Homotrimer.

It is found in the cell inner membrane. The enzyme catalyses 4-(trimethylamino)butanoate(in) + (R)-carnitine(out) = 4-(trimethylamino)butanoate(out) + (R)-carnitine(in). Its pathway is amine and polyamine metabolism; carnitine metabolism. In terms of biological role, catalyzes the exchange of L-carnitine for gamma-butyrobetaine. The chain is L-carnitine/gamma-butyrobetaine antiporter from Citrobacter koseri (strain ATCC BAA-895 / CDC 4225-83 / SGSC4696).